Consider the following 350-residue polypeptide: Quinone oxidoreductase-like protein 2 (350 aa).

Lysine 36 is modified (N6-acetyllysine). Position 201 is an N6-succinyllysine (lysine 201). N6-acetyllysine occurs at positions 302 and 328.

This sequence belongs to the zinc-containing alcohol dehydrogenase family. Quinone oxidoreductase subfamily.

The protein is Quinone oxidoreductase-like protein 2 of Rattus norvegicus (Rat).